We begin with the raw amino-acid sequence, 108 residues long: MMKGGMGNLMKQAQEMQEKMQKIQEEIAETEVTGEAGAGMIKVTMNGRHDVSRVNVDPSVMEEDKELLEDLLAAAVNDAVRKVEETSRGRMEEATEGMNLPPGFKMPF.

Positions 84-93 are enriched in basic and acidic residues; that stretch reads EETSRGRMEE. Residues 84-108 are disordered; it reads EETSRGRMEEATEGMNLPPGFKMPF.

It belongs to the YbaB/EbfC family. As to quaternary structure, homodimer.

The protein resides in the cytoplasm. It is found in the nucleoid. Its function is as follows. Binds to DNA and alters its conformation. May be involved in regulation of gene expression, nucleoid organization and DNA protection. The protein is Nucleoid-associated protein Csal_1459 of Chromohalobacter salexigens (strain ATCC BAA-138 / DSM 3043 / CIP 106854 / NCIMB 13768 / 1H11).